The chain runs to 302 residues: Putative gluconeogenesis factor (302 aa).

The protein belongs to the gluconeogenesis factor family.

It localises to the cytoplasm. Required for morphogenesis under gluconeogenic growth conditions. The sequence is that of Putative gluconeogenesis factor (ybhK) from Salmonella typhi.